The following is a 204-amino-acid chain: Small ribosomal subunit protein uS4 (204 aa).

Residues 92–157 form the S4 RNA-binding domain; the sequence is RRLDALVLRS…KPLFEVAREG (66 aa).

This sequence belongs to the universal ribosomal protein uS4 family. As to quaternary structure, part of the 30S ribosomal subunit. Contacts protein S5. The interaction surface between S4 and S5 is involved in control of translational fidelity.

One of the primary rRNA binding proteins, it binds directly to 16S rRNA where it nucleates assembly of the body of the 30S subunit. Its function is as follows. With S5 and S12 plays an important role in translational accuracy. The protein is Small ribosomal subunit protein uS4 of Streptomyces avermitilis (strain ATCC 31267 / DSM 46492 / JCM 5070 / NBRC 14893 / NCIMB 12804 / NRRL 8165 / MA-4680).